The primary structure comprises 382 residues: MAFGSLLAFVALAAITRAAPTAESAVCPDGTRVTNAACCAFIPLAQDLQETLFQGDCGEDAHEVIRLTFHDAIAISQSLGPQAGGGADGSMLHFPTIEPNFSANSGIDDSVNNLLPFMQKHDTISAADLVQFAGAVALSNCPGAPRLEFMAGRPNTTIPAVEGLIPEPQDSVTKILQRFEDAGNFSPFEVVSLLASHTVARADKVDETIDAAPFDSTPFTFDTQVFLEVLLKGTGFPGSNNNTGEVMSPLPLGSGSDTGEMRLQSDFALARDERTACFWQSFVNEQEFMAASFKAAMAKLAILGHSRSSLIDCSDVVPVPKPAVNKPATFPATKGPKDLDTLTCKALKFPTLTSDPGATETLIPHCSNGGMSCPGVQFDGPA.

Residues 1 to 24 form the signal peptide; the sequence is MAFGSLLAFVALAAITRAAPTAES. 5 disulfide bridges follow: Cys-27-Cys-39, Cys-38-Cys-313, Cys-57-Cys-141, Cys-277-Cys-344, and Cys-366-Cys-373. Residues Glu-59 and Glu-63 each coordinate Mn(2+). The Proton acceptor role is filled by His-70. Ca(2+) contacts are provided by Asp-71, Gly-86, Asp-88, and Ser-90. N-linked (GlcNAc...) asparagine glycosylation is found at Asn-100 and Asn-155. His-197 is a binding site for heme b. Residue Thr-198 coordinates Ca(2+). Asp-203 provides a ligand contact to Mn(2+). The Ca(2+) site is built by Asp-215, Thr-217, Thr-220, and Asp-222. N-linked (GlcNAc...) asparagine glycosylation is present at Asn-241.

The protein belongs to the peroxidase family. Ligninase subfamily. Heme b serves as cofactor. The cofactor is Ca(2+).

It localises to the secreted. It carries out the reaction 2 Mn(2+) + H2O2 + 2 H(+) = 2 Mn(3+) + 2 H2O. Functionally, catalyzes the oxidation of Mn(2+) to Mn(3+). The latter, acting as a diffusible redox mediator, is capable of oxidizing a variety of lignin compounds. This chain is Manganese peroxidase H4, found in Phanerodontia chrysosporium (White-rot fungus).